Consider the following 162-residue polypeptide: UPF0303 protein RL3365 (162 aa).

It belongs to the UPF0303 family.

The protein is UPF0303 protein RL3365 of Rhizobium johnstonii (strain DSM 114642 / LMG 32736 / 3841) (Rhizobium leguminosarum bv. viciae).